A 190-amino-acid polypeptide reads, in one-letter code: MSNSIIQSPDLGDVTGYLRDRIRTVPDWPQPGVMFRDITPLLQNPKTLRVLIDVFVHRYMDQNLDLVAGIDARGFILGSIIAYELNLGFVPIRKKGKLPFQTVAEEYELEYGSATVEIHADACKPGDRVLLIDDLIATGGTMMAGRKLLERLGATVVEGGAIVDLPELGGSKLLQASGLSLFTVCNFDGH.

Belongs to the purine/pyrimidine phosphoribosyltransferase family. Homodimer.

It is found in the cytoplasm. It carries out the reaction AMP + diphosphate = 5-phospho-alpha-D-ribose 1-diphosphate + adenine. It functions in the pathway purine metabolism; AMP biosynthesis via salvage pathway; AMP from adenine: step 1/1. Functionally, catalyzes a salvage reaction resulting in the formation of AMP, that is energically less costly than de novo synthesis. The polypeptide is Adenine phosphoribosyltransferase (Cupriavidus metallidurans (strain ATCC 43123 / DSM 2839 / NBRC 102507 / CH34) (Ralstonia metallidurans)).